A 353-amino-acid polypeptide reads, in one-letter code: uncharacterized protein (353 aa).

An N-terminal signal peptide occupies residues 1 to 24 (MRVVERAVIACYLGITIFSGIAFG).

It belongs to the chlamydial CPn_1058/CT_355/TC_0634 family.

This is an uncharacterized protein from Chlamydia trachomatis serovar D (strain ATCC VR-885 / DSM 19411 / UW-3/Cx).